We begin with the raw amino-acid sequence, 353 residues long: 4-hydroxy-2-oxovalerate aldolase 1 (353 aa).

The region spanning 14-266 (VRMTDTSLRD…KTGIDFFDIA (253 aa)) is the Pyruvate carboxyltransferase domain. 22–23 (RD) is a binding site for substrate. D23 contacts Mn(2+). H26 functions as the Proton acceptor in the catalytic mechanism. Substrate-binding residues include S176 and H205. Mn(2+) contacts are provided by H205 and H207. Y296 lines the substrate pocket.

This sequence belongs to the 4-hydroxy-2-oxovalerate aldolase family.

It carries out the reaction (S)-4-hydroxy-2-oxopentanoate = acetaldehyde + pyruvate. The chain is 4-hydroxy-2-oxovalerate aldolase 1 from Mycobacterium sp. (strain KMS).